A 461-amino-acid polypeptide reads, in one-letter code: Pyruvate kinase (461 aa).

Arg46 contributes to the substrate binding site. 2 residues coordinate K(+): Asn48 and Asp80. An ATP-binding site is contributed by Asn48–His51. Residues Arg87 and Lys165 each contribute to the ATP site. Position 232 (Glu232) interacts with Mg(2+). Positions 255, 256, and 288 each coordinate substrate. Residue Asp256 participates in Mg(2+) binding.

The protein belongs to the pyruvate kinase family. As to quaternary structure, homotetramer. It depends on a divalent metal cation as a cofactor.

It carries out the reaction pyruvate + ATP = phosphoenolpyruvate + ADP + H(+). It functions in the pathway carbohydrate degradation; glycolysis; pyruvate from D-glyceraldehyde 3-phosphate: step 5/5. With respect to regulation, not activated by classical allosteric effectors. In Pyrobaculum aerophilum (strain ATCC 51768 / DSM 7523 / JCM 9630 / CIP 104966 / NBRC 100827 / IM2), this protein is Pyruvate kinase (pyk).